The sequence spans 185 residues: Transcriptional repressor NrdR (185 aa).

The tract at residues 1 to 24 is disordered; sequence MRCPFCGGPDTQVKDSRPSEDSSA. Residues 3 to 34 fold into a zinc finger; that stretch reads CPFCGGPDTQVKDSRPSEDSSAIRRRRVCPDC. Over residues 12-24 the composition is skewed to basic and acidic residues; sequence QVKDSRPSEDSSA. Residues 49–139 enclose the ATP-cone domain; that stretch reads LVVLKRSGKR…VYKNFREAQD (91 aa). The disordered stretch occupies residues 149-185; sequence ERLEGEGDLPEDGEAAPAPPDEVVAAPRRGRPARKRA. The span at 176-185 shows a compositional bias: basic residues; the sequence is RRGRPARKRA.

The protein belongs to the NrdR family. The cofactor is Zn(2+).

In terms of biological role, negatively regulates transcription of bacterial ribonucleotide reductase nrd genes and operons by binding to NrdR-boxes. The polypeptide is Transcriptional repressor NrdR (Methylorubrum extorquens (strain PA1) (Methylobacterium extorquens)).